The following is a 345-amino-acid chain: Dihydroorotate dehydrogenase (quinone) (345 aa).

Residues 65–69 (AGLDK) and Thr-89 contribute to the FMN site. Position 69 (Lys-69) interacts with substrate. 114 to 118 (NRMGF) contributes to the substrate binding site. Residues Asn-142 and Asn-175 each contribute to the FMN site. Asn-175 is a substrate binding site. The active-site Nucleophile is the Ser-178. Asn-180 is a substrate binding site. Positions 220 and 248 each coordinate FMN. 249-250 (NT) is a binding site for substrate. FMN contacts are provided by residues Gly-271, Gly-300, and 321–322 (YT).

This sequence belongs to the dihydroorotate dehydrogenase family. Type 2 subfamily. As to quaternary structure, monomer. FMN is required as a cofactor.

It is found in the cell membrane. The catalysed reaction is (S)-dihydroorotate + a quinone = orotate + a quinol. Its pathway is pyrimidine metabolism; UMP biosynthesis via de novo pathway; orotate from (S)-dihydroorotate (quinone route): step 1/1. Catalyzes the conversion of dihydroorotate to orotate with quinone as electron acceptor. The sequence is that of Dihydroorotate dehydrogenase (quinone) from Burkholderia thailandensis (strain ATCC 700388 / DSM 13276 / CCUG 48851 / CIP 106301 / E264).